A 522-amino-acid polypeptide reads, in one-letter code: ATP synthase subunit alpha (522 aa).

ATP is bound at residue 176-183 (GDRQTGKT).

This sequence belongs to the ATPase alpha/beta chains family. In terms of assembly, F-type ATPases have 2 components, CF(1) - the catalytic core - and CF(0) - the membrane proton channel. CF(1) has five subunits: alpha(3), beta(3), gamma(1), delta(1), epsilon(1). CF(0) has four main subunits: a, b, b' and c.

The protein localises to the cell membrane. It carries out the reaction ATP + H2O + 4 H(+)(in) = ADP + phosphate + 5 H(+)(out). In terms of biological role, produces ATP from ADP in the presence of a proton gradient across the membrane. The alpha chain is a regulatory subunit. This Chloroflexus aggregans (strain MD-66 / DSM 9485) protein is ATP synthase subunit alpha.